Here is a 751-residue protein sequence, read N- to C-terminus: Photosystem I P700 chlorophyll a apoprotein A1 (751 aa).

8 consecutive transmembrane segments (helical) span residues 73–96 (VFSAHFGQLGIIFIWLSGMYFHGA), 159–182 (LYATAIGGLVMAAAMFFAGWFHYH), 198–222 (MNHHLAGLLGLGSLAWAGHQIHISL), 294–312 (EAHHHLAIAVLFLIAGHQY), 349–372 (WHAQLAINLAMLGSLSIIVAHHMY), 388–414 (LSLFTHHVWIGGFCIVGAGAHAAIFMV), 436–458 (AIISHLNWVCIFLGFHSFGLYIH), and 533–551 (FLVHHIHAFTIHVTVLILL). [4Fe-4S] cluster-binding residues include C575 and C584. A run of 2 helical transmembrane segments spans residues 591–612 (HVFLGLFWMYNSLSIVIFHFSW) and 665–687 (LSAYGLMFLGAHFVWAFSLMFLF). H676 provides a ligand contact to chlorophyll a'. Residues M684 and Y692 each coordinate chlorophyll a. Residue W693 coordinates phylloquinone. A helical membrane pass occupies residues 725–745 (AVGVAHYLLGGIATTWSFFLA).

The protein belongs to the PsaA/PsaB family. The PsaA/B heterodimer binds the P700 chlorophyll special pair and subsequent electron acceptors. PSI consists of a core antenna complex that captures photons, and an electron transfer chain that converts photonic excitation into a charge separation. The eukaryotic PSI reaction center is composed of at least 11 subunits. Requires P700 is a chlorophyll a/chlorophyll a' dimer, A0 is one or more chlorophyll a, A1 is one or both phylloquinones and FX is a shared 4Fe-4S iron-sulfur center. as cofactor.

The protein localises to the plastid. It localises to the chloroplast thylakoid membrane. It catalyses the reaction reduced [plastocyanin] + hnu + oxidized [2Fe-2S]-[ferredoxin] = oxidized [plastocyanin] + reduced [2Fe-2S]-[ferredoxin]. Functionally, psaA and PsaB bind P700, the primary electron donor of photosystem I (PSI), as well as the electron acceptors A0, A1 and FX. PSI is a plastocyanin/cytochrome c6-ferredoxin oxidoreductase, converting photonic excitation into a charge separation, which transfers an electron from the donor P700 chlorophyll pair to the spectroscopically characterized acceptors A0, A1, FX, FA and FB in turn. Oxidized P700 is reduced on the lumenal side of the thylakoid membrane by plastocyanin or cytochrome c6. The polypeptide is Photosystem I P700 chlorophyll a apoprotein A1 (Oltmannsiellopsis viridis (Marine flagellate)).